Here is a 594-residue protein sequence, read N- to C-terminus: TOX high mobility group box family member 4-B (594 aa).

Disordered stretches follow at residues 160–225 (GTIL…PQKP) and 522–545 (ESPP…SPQC). Residues 207–217 (KPKTPKKKKKK) show a composition bias toward basic residues. The short motif at 212–217 (KKKKKK) is the Nuclear localization signal element. Residues 222-290 (PQKPLSAYAL…EYLKALALYK (69 aa)) constitute a DNA-binding region (HMG box).

In terms of assembly, component of the PNUTS-PP1 phosphatase complex.

Its subcellular location is the nucleus. It is found in the chromosome. In terms of biological role, transcription factor that modulates cell fate reprogramming from the somatic state to the pluripotent and neuronal fate. Also acts as a regulatory component of protein phosphatase 1 (PP1) complexes. Component of the PNUTS-PP1 protein phosphatase complex, a PP1 complex that regulates RNA polymerase II transcription pause-release. PNUTS-PP1 also plays a role in the control of chromatin structure and cell cycle progression during the transition from mitosis into interphase. The polypeptide is TOX high mobility group box family member 4-B (tox4-b) (Xenopus laevis (African clawed frog)).